The following is a 674-amino-acid chain: DNA ligase (674 aa).

NAD(+)-binding positions include D35–D39, S84–L85, and E118. Catalysis depends on K120, which acts as the N6-AMP-lysine intermediate. Positions 141, 184, 297, and 321 each coordinate NAD(+). Zn(2+)-binding residues include C415, C418, C433, and C439. Positions Q598 to L674 constitute a BRCT domain.

The protein belongs to the NAD-dependent DNA ligase family. LigA subfamily. The cofactor is Mg(2+). Mn(2+) is required as a cofactor.

The catalysed reaction is NAD(+) + (deoxyribonucleotide)n-3'-hydroxyl + 5'-phospho-(deoxyribonucleotide)m = (deoxyribonucleotide)n+m + AMP + beta-nicotinamide D-nucleotide.. DNA ligase that catalyzes the formation of phosphodiester linkages between 5'-phosphoryl and 3'-hydroxyl groups in double-stranded DNA using NAD as a coenzyme and as the energy source for the reaction. It is essential for DNA replication and repair of damaged DNA. In Pelodictyon phaeoclathratiforme (strain DSM 5477 / BU-1), this protein is DNA ligase.